The chain runs to 205 residues: Rho GDP-dissociation inhibitor (205 aa).

Over residues 1–11 (MSVNNEVSADQ) the composition is skewed to polar residues. The tract at residues 1–31 (MSVNNEVSADQHNPELEDDTFEHGPPVSLGE) is disordered. The residue at position 63 (Ser-63) is a Phosphoserine.

The protein belongs to the Rho GDI family.

It localises to the cytoplasm. It is found in the nucleus. Regulates the GDP/GTP exchange reaction of the Rho proteins by inhibiting the dissociation of GDP from them, and the subsequent binding of GTP to them. This Schizosaccharomyces pombe (strain 972 / ATCC 24843) (Fission yeast) protein is Rho GDP-dissociation inhibitor.